A 463-amino-acid polypeptide reads, in one-letter code: Nicotinate phosphoribosyltransferase pncB2 (463 aa).

His-202 carries the post-translational modification Phosphohistidine.

This sequence belongs to the NAPRTase family. Transiently phosphorylated on a His residue during the reaction cycle. Phosphorylation strongly increases the affinity for substrates and increases the rate of nicotinate D-ribonucleotide production. Dephosphorylation regenerates the low-affinity form of the enzyme, leading to product release.

The catalysed reaction is nicotinate + 5-phospho-alpha-D-ribose 1-diphosphate + ATP + H2O = nicotinate beta-D-ribonucleotide + ADP + phosphate + diphosphate. It participates in cofactor biosynthesis; NAD(+) biosynthesis; nicotinate D-ribonucleotide from nicotinate: step 1/1. Its function is as follows. Involved in the Preiss-Handler pathway, which is a recycling route that permits the salvage of free nicotinamide (NM) and nicotinic acid (Na) involved in the NAD biosynthesis. Catalyzes the synthesis of beta-nicotinate D-ribonucleotide from nicotinate and 5-phospho-D-ribose 1-phosphate at the expense of ATP. It is not able to use nicotinamide. PncB2 appears to be responsible for the increased salvage synthesis of NAD during infection of host tissues. The sequence is that of Nicotinate phosphoribosyltransferase pncB2 (pncB2) from Mycobacterium tuberculosis (strain CDC 1551 / Oshkosh).